The sequence spans 176 residues: Large ribosomal subunit protein uL10 (176 aa).

Belongs to the universal ribosomal protein uL10 family. Part of the ribosomal stalk of the 50S ribosomal subunit. The N-terminus interacts with L11 and the large rRNA to form the base of the stalk. The C-terminus forms an elongated spine to which L12 dimers bind in a sequential fashion forming a multimeric L10(L12)X complex.

Forms part of the ribosomal stalk, playing a central role in the interaction of the ribosome with GTP-bound translation factors. The polypeptide is Large ribosomal subunit protein uL10 (Natranaerobius thermophilus (strain ATCC BAA-1301 / DSM 18059 / JW/NM-WN-LF)).